The primary structure comprises 994 residues: E3 ubiquitin-protein ligase Arkadia (994 aa).

Residues Lys-19, Lys-28, Lys-34, Lys-47, Lys-59, Lys-73, Lys-87, Lys-96, and Lys-110 each participate in a glycyl lysine isopeptide (Lys-Gly) (interchain with G-Cter in SUMO2) cross-link. Positions His-66 to Leu-89 are enriched in basic and acidic residues. The interval His-66–Gln-106 is disordered. The segment at Gln-120–Ser-191 is disordered. The span at Ser-132–Asp-151 shows a compositional bias: low complexity. Polar residues predominate over residues Arg-164 to Lys-173. A Glycyl lysine isopeptide (Lys-Gly) (interchain with G-Cter in SUMO2) cross-link involves residue Lys-173. Residues Ser-174–Trp-184 are compositionally biased toward basic residues. Glycyl lysine isopeptide (Lys-Gly) (interchain with G-Cter in SUMO2) cross-links involve residues Lys-198 and Lys-218. Residues Cys-212–Leu-277 form a disordered region. A compositionally biased stretch (basic residues) spans Met-234–Tyr-247. Residues Val-241 to Ser-404 form an interaction with AXIN1 region. Residues Ser-252 to Thr-271 show a composition bias toward low complexity. Residues Val-300–Glu-304 carry the SUMO interaction motif 1 (SIM) motif. The SUMO interaction motif 2 (SIM) motif lies at Glu-325 to Val-331. A disordered region spans residues Ser-337–Val-371. Residues His-347 to Ser-357 show a composition bias toward low complexity. The SUMO interaction motif 3 (SIM) signature appears at Val-382–Thr-386. Disordered regions lie at residues Asp-388–Arg-476, His-508–Cys-537, Ala-610–Val-684, and Ile-696–Ala-742. Polar residues predominate over residues Val-395 to Thr-467. The segment covering His-508–Pro-522 has biased composition (basic residues). Residues Asn-670–Gln-680 are compositionally biased toward pro residues. Positions Tyr-907–His-909 are ubiquitin binding. Glycyl lysine isopeptide (Lys-Gly) (interchain with G-Cter in SUMO2) cross-links involve residues Lys-923 and Lys-927. Positions 942 and 945 each coordinate Zn(2+). An RING-type; atypical zinc finger spans residues Cys-942–Arg-983. Positions Arg-957–Met-961 are ubiquitin binding. Zn(2+)-binding residues include His-965 and Cys-968.

Belongs to the Arkadia family. As to quaternary structure, monomer. Interacts with SMAD6, SMAD7, AXIN1, AXIN2 and SKIL isoform SNON. Interacts with (phosphorylated) SMAD2 and SMAD3. Part of a complex containing RNF111, AXIN1 and SMAD7. Interacts (via SIM domains) with SUMO1 and SUMO2. In terms of tissue distribution, broadly expressed.

It localises to the nucleus. The protein localises to the cytoplasm. It is found in the PML body. It catalyses the reaction S-ubiquitinyl-[E2 ubiquitin-conjugating enzyme]-L-cysteine + [acceptor protein]-L-lysine = [E2 ubiquitin-conjugating enzyme]-L-cysteine + N(6)-ubiquitinyl-[acceptor protein]-L-lysine.. Its pathway is protein modification; protein ubiquitination. Its activity is regulated as follows. Binds free ubiquitin non-covalently via its RING-type zinc finger. Ubiquitin-binding leads to enhance the E3 ubiquitin-protein ligase activity by stabilizing the ubiquitin-conjugating enzyme E2 (donor ubiquitin) in the 'closed' conformation and activating ubiquitin transfer. Its function is as follows. E3 ubiquitin-protein ligase. Required for mesoderm patterning during embryonic development. Acts as an enhancer of the transcriptional responses of the SMAD2/SMAD3 effectors, which are activated downstream of BMP. Acts by mediating ubiquitination and degradation of SMAD inhibitors such as SMAD7, inducing their proteasomal degradation and thereby enhancing the transcriptional activity of TGF-beta and BMP. In addition to enhance transcription of SMAD2/SMAD3 effectors, also regulates their turnover by mediating their ubiquitination and subsequent degradation, coupling their activation with degradation, thereby ensuring that only effectors 'in use' are degraded. Activates SMAD3/SMAD4-dependent transcription by triggering signal-induced degradation of SNON isoform of SKIL. Associates with UBE2D2 as an E2 enzyme. Specifically binds polysumoylated chains via SUMO interaction motifs (SIMs) and mediates ubiquitination of sumoylated substrates. Catalyzes 'Lys-63'-linked ubiquitination of sumoylated XPC in response to UV irradiation, promoting nucleotide excision repair. Mediates ubiquitination and degradation of sumoylated PML. The regulation of the BMP-SMAD signaling is however independent of sumoylation and is not dependent of SUMO interaction motifs (SIMs). This chain is E3 ubiquitin-protein ligase Arkadia, found in Homo sapiens (Human).